The following is a 226-amino-acid chain: Clarin-3 (226 aa).

A helical membrane pass occupies residues 8–28 (LMFLSGFLTSLGSVVVICSIL). 2 N-linked (GlcNAc...) asparagine glycosylation sites follow: asparagine 46 and asparagine 83. Transmembrane regions (helical) follow at residues 92–112 (VVIILLILSLAASLLSSMFTF), 128–148 (GVYTWNGLSASFVFLTMVLFV), and 181–201 (FWLILLVILLNIVTVVIIIFY).

Belongs to the clarin family.

It localises to the membrane. This Rattus norvegicus (Rat) protein is Clarin-3 (Clrn3).